Consider the following 124-residue polypeptide: Small ribosomal subunit protein uS12 (124 aa).

A disordered region spans residues Met1–Gly32. Basic and acidic residues predominate over residues Gly11–Lys20. The residue at position 89 (Asp89) is a 3-methylthioaspartic acid.

Belongs to the universal ribosomal protein uS12 family. As to quaternary structure, part of the 30S ribosomal subunit. Contacts proteins S8 and S17. May interact with IF1 in the 30S initiation complex.

Functionally, with S4 and S5 plays an important role in translational accuracy. Interacts with and stabilizes bases of the 16S rRNA that are involved in tRNA selection in the A site and with the mRNA backbone. Located at the interface of the 30S and 50S subunits, it traverses the body of the 30S subunit contacting proteins on the other side and probably holding the rRNA structure together. The combined cluster of proteins S8, S12 and S17 appears to hold together the shoulder and platform of the 30S subunit. The protein is Small ribosomal subunit protein uS12 of Frankia alni (strain DSM 45986 / CECT 9034 / ACN14a).